A 70-amino-acid polypeptide reads, in one-letter code: Turripeptide Pal9.2 (70 aa).

The signal sequence occupies residues 1–20 (MKVYCLLVVLLVGLVSQTQG). Residues 21–70 (QLDKKCNMACTLDYRPVCGSDGKTYPNRCALTSTACESQQSITVLHDGEC) enclose the Kazal-like domain. 3 cysteine pairs are disulfide-bonded: C26-C56, C30-C49, and C38-C70.

Belongs to the conopeptide P-like superfamily. As to expression, expressed by the venom duct.

It localises to the secreted. Functionally, acts as a neurotoxin by inhibiting an ion channel. May also act as a serine protease inhibitor, since it possess the kazal serine protease inhibitor signature. The chain is Turripeptide Pal9.2 from Polystira albida (White giant-turris).